The primary structure comprises 716 residues: Fatty acid oxidation complex subunit alpha (716 aa).

The tract at residues 1–189 is enoyl-CoA hydratase/isomerase; it reads MIYQSPTIQV…KVGAVDAVVA (189 aa). Aspartate 296 serves as a coordination point for substrate. The 3-hydroxyacyl-CoA dehydrogenase stretch occupies residues 311–716; the sequence is KEVNNAAVLG…AANNGSYYQA (406 aa). NAD(+)-binding positions include methionine 324, aspartate 343, 400–402, lysine 407, and serine 429; that span reads VVE. The For 3-hydroxyacyl-CoA dehydrogenase activity role is filled by histidine 450. NAD(+) is bound at residue asparagine 453. Asparagine 500 and tyrosine 660 together coordinate substrate.

It in the N-terminal section; belongs to the enoyl-CoA hydratase/isomerase family. This sequence in the C-terminal section; belongs to the 3-hydroxyacyl-CoA dehydrogenase family. Heterotetramer of two alpha chains (FadB) and two beta chains (FadA).

The enzyme catalyses a (3S)-3-hydroxyacyl-CoA + NAD(+) = a 3-oxoacyl-CoA + NADH + H(+). It catalyses the reaction a (3S)-3-hydroxyacyl-CoA = a (2E)-enoyl-CoA + H2O. It carries out the reaction a 4-saturated-(3S)-3-hydroxyacyl-CoA = a (3E)-enoyl-CoA + H2O. The catalysed reaction is (3S)-3-hydroxybutanoyl-CoA = (3R)-3-hydroxybutanoyl-CoA. The enzyme catalyses a (3Z)-enoyl-CoA = a 4-saturated (2E)-enoyl-CoA. It catalyses the reaction a (3E)-enoyl-CoA = a 4-saturated (2E)-enoyl-CoA. It functions in the pathway lipid metabolism; fatty acid beta-oxidation. In terms of biological role, involved in the aerobic and anaerobic degradation of long-chain fatty acids via beta-oxidation cycle. Catalyzes the formation of 3-oxoacyl-CoA from enoyl-CoA via L-3-hydroxyacyl-CoA. It can also use D-3-hydroxyacyl-CoA and cis-3-enoyl-CoA as substrate. This Shewanella baltica (strain OS195) protein is Fatty acid oxidation complex subunit alpha.